A 354-amino-acid polypeptide reads, in one-letter code: D-alanine--D-alanine ligase (354 aa).

An ATP-grasp domain is found at K133–E338. E166–E221 contributes to the ATP binding site. Residues D292, E305, and N307 each contribute to the Mg(2+) site.

The protein belongs to the D-alanine--D-alanine ligase family. Mg(2+) serves as cofactor. It depends on Mn(2+) as a cofactor.

Its subcellular location is the cytoplasm. The enzyme catalyses 2 D-alanine + ATP = D-alanyl-D-alanine + ADP + phosphate + H(+). It functions in the pathway cell wall biogenesis; peptidoglycan biosynthesis. In terms of biological role, cell wall formation. The chain is D-alanine--D-alanine ligase from Bacillus velezensis (strain DSM 23117 / BGSC 10A6 / LMG 26770 / FZB42) (Bacillus amyloliquefaciens subsp. plantarum).